Here is a 271-residue protein sequence, read N- to C-terminus: Formamidopyrimidine-DNA glycosylase (271 aa).

The Schiff-base intermediate with DNA role is filled by Pro2. Glu3 serves as the catalytic Proton donor. The active-site Proton donor; for beta-elimination activity is the Lys58. 3 residues coordinate DNA: His91, Arg110, and Arg152. Residues 237 to 271 form an FPG-type zinc finger; sequence SVYGRNDAPCPGCGAPIRRSRQGGRSTYFCDRCQH. The Proton donor; for delta-elimination activity role is filled by Arg261.

This sequence belongs to the FPG family. Monomer. It depends on Zn(2+) as a cofactor.

The catalysed reaction is Hydrolysis of DNA containing ring-opened 7-methylguanine residues, releasing 2,6-diamino-4-hydroxy-5-(N-methyl)formamidopyrimidine.. It carries out the reaction 2'-deoxyribonucleotide-(2'-deoxyribose 5'-phosphate)-2'-deoxyribonucleotide-DNA = a 3'-end 2'-deoxyribonucleotide-(2,3-dehydro-2,3-deoxyribose 5'-phosphate)-DNA + a 5'-end 5'-phospho-2'-deoxyribonucleoside-DNA + H(+). Involved in base excision repair of DNA damaged by oxidation or by mutagenic agents. Acts as a DNA glycosylase that recognizes and removes damaged bases. Has a preference for oxidized purines, such as 7,8-dihydro-8-oxoguanine (8-oxoG). Has AP (apurinic/apyrimidinic) lyase activity and introduces nicks in the DNA strand. Cleaves the DNA backbone by beta-delta elimination to generate a single-strand break at the site of the removed base with both 3'- and 5'-phosphates. This is Formamidopyrimidine-DNA glycosylase from Geotalea uraniireducens (strain Rf4) (Geobacter uraniireducens).